The sequence spans 394 residues: Elongation factor Tu 2 (394 aa).

Positions Lys-10 to Glu-204 constitute a tr-type G domain. The G1 stretch occupies residues Gly-19–Thr-26. Gly-19–Thr-26 provides a ligand contact to GTP. Thr-26 contacts Mg(2+). Positions Gly-60–Ser-64 are G2. The tract at residues Asp-81–Gly-84 is G3. GTP is bound by residues Asp-81–His-85 and Asn-136–Asp-139. The interval Asn-136–Asp-139 is G4. The tract at residues Ser-174–Leu-176 is G5.

This sequence belongs to the TRAFAC class translation factor GTPase superfamily. Classic translation factor GTPase family. EF-Tu/EF-1A subfamily. In terms of assembly, monomer.

It is found in the cytoplasm. It catalyses the reaction GTP + H2O = GDP + phosphate + H(+). GTP hydrolase that promotes the GTP-dependent binding of aminoacyl-tRNA to the A-site of ribosomes during protein biosynthesis. The protein is Elongation factor Tu 2 of Vibrio vulnificus (strain CMCP6).